Here is a 1755-residue protein sequence, read N- to C-terminus: Intraflagellar transport protein 172 (1755 aa).

8 WD repeats span residues 14–53 (DQYQKITSLTWAPNNSRLAAVSTDKVVYLFDENGEKRDKF), 63–102 (PNTYIIRAMAFSPDSTKLAIAQSDNIVFIYRLVDPDTGAE), 111–153 (PQAC…TCYA), 155–194 (PENSYVVALASSLNGQNVISGHMDGAIWKFNFPAEEGGTP), 198–238 (QLVV…RSFD), 289–328 (DNFYAVSAASWKPDGSKMTVGSMTGAVDMYDACVKRHMYK), 487–525 (NHDTKVDWLELNQRGTHLLFRDKKRHLHLFSLSGQERTT), and 526–563 (LLNYCQYVQWVPGSDVIVAQSRNNLCVWYSVNKPDNVT). TPR repeat units follow at residues 597–628 (DEALIYFGAALEDQDYERAVQTLEPLELTPET), 696–729 (NKQWPVSESLLLAQGKVDDAITLYQDNHRWEDAI), 754–788 (TGQEEQAGAVKEREGDYLAAIGLYLKGGLPGRAAQ), 813–846 (AGLYERAGELYEHMSRSSEAMQSYRRGHAYRKAI), 858–892 (IIIEEEWGDWLVTQKQMDAAINHFIESGATLKAIK), 916–949 (MPYFRRIAQHYETTGALEEAERYYIRADMARDAV), 988–1023 (AHKLKEAEKAYLAAGGDDVDKAIAMYKRNKMYDQMI), 1048–1081 (EGNLREAEKHFVEAKDWKSAVQMYRQVNQWEDAL), 1219–1252 (RKQWLPAEGLFIKAKRPEAALKMYRDARMWNDAL), 1285–1318 (ADAVINKARGFERNNDYARAIETYLSLTAQDTSN), 1355–1388 (IGRHQAAGELHESIDDAQGAIRAYCAGRLWDKAR), 1455–1489 (SNYALKHAERRFKQGDYAQAAQVFAQHGITAQPQY), and 1586–1619 (DRAFYEAGLAWYEAGRKNMAFVMLNRFLDLSDAM).

Belongs to the IFT172 family. Component of the IFT complex B, the core composed of IFT25, IFT27, IFT46, IFT52, IFT74, IFT81 and IFT88 as well as associated subunits IFT20, IFT57, IFT80 and IFT172. Interacts with microtubule end-binding protein 1 (MAPRE1/EB1).

It is found in the cytoplasm. The protein resides in the cytoskeleton. Its subcellular location is the cilium basal body. Its function is as follows. Required for the maintenance and formation of cilia and participates in the control of flagellar assembly/disassembly at the tip. Involved in regulating the transition between anterograde and retrograde intraflagellar transport at the tip. This chain is Intraflagellar transport protein 172 (IFT172), found in Chlamydomonas reinhardtii (Chlamydomonas smithii).